Consider the following 329-residue polypeptide: MFSLSFIVIAVIIVVALLILFSFVPIGLWISALAAGVHVGIGTLVGMRLRRVSPRKVIAPLIKAHKAGLALTTNQLESHYLAGGNVDRVVDANIAAQRADIDLPFERAAAIDLAGRDVLEAVQMSVNPKVIETPFIAGVAMNGIEVKAKARITVRANIARLVGGAGEETIIARVGEGIVSTIGSSKHHTEVLENPDNISKTVLSKGLDSGTAFEILSIDIADVDISKNIGADLQTEQALADKNIAQAKAEERRAMAVATEQEMKARVQEMHAKVVEAESEVPLAMAEALRSGNISVKDYYNLKNIEADTGMRNAINKRTDQSDDESPEH.

2 helical membrane passes run 6–26 (FIVIAVIIVVALLILFSFVPI) and 27–47 (GLWISALAAGVHVGIGTLVGM).

This sequence belongs to the flotillin-like FloA family. As to quaternary structure, homooligomerizes.

The protein resides in the cell membrane. It localises to the membrane raft. Found in functional membrane microdomains (FMM) that may be equivalent to eukaryotic membrane rafts. FMMs are highly dynamic and increase in number as cells age. Flotillins are thought to be important factors in membrane fluidity. This chain is Flotillin-like protein FloA, found in Staphylococcus aureus (strain USA300).